The primary structure comprises 812 residues: Outer membrane usher protein FaeD (812 aa).

The first 35 residues, Met1–Ala35, serve as a signal peptide directing secretion. A disulfide bridge connects residues Cys793 and Cys811.

It belongs to the fimbrial export usher family.

It localises to the cell outer membrane. In terms of biological role, involved in the export and assembly of K88ab fimbrial subunits across the outer membrane. The protein is Outer membrane usher protein FaeD (faeD) of Escherichia coli.